The sequence spans 1323 residues: uncharacterized protein (1323 aa).

A compositionally biased stretch (basic and acidic residues) spans 1-11 (MRELQGDDSSR). 2 disordered regions span residues 1–57 (MREL…SSYY) and 79–112 (IHESSTALSAQSNTAQDGDQLASSSTISKDHSET). Over residues 12 to 21 (KSPPSDSVVK) the composition is skewed to low complexity. At Ser-24 the chain carries Phosphoserine. A compositionally biased stretch (basic and acidic residues) spans 27–40 (DYEHSLKSLQDERT). Composition is skewed to polar residues over residues 42–57 (NYPNKQFNSENPSSYY) and 80–105 (HESSTALSAQSNTAQDGDQLASSSTI). 6 WD repeats span residues 271–314 (RHST…DRAI), 320–360 (GHTR…FPVN), 364–403 (DWHNGATQVKWNYKNPHILASSHGRLVRIWDDRYGSAPLH), 409–449 (ENIT…EEPE), 453–494 (TTDS…KEGP), and 502–551 (GHTD…LNSM). The RWD domain maps to 671–779 (EELSWIGQKY…SYLSGNLSVD (109 aa)). Over residues 879–888 (SNSVADSDST) the composition is skewed to polar residues. Residues 879 to 904 (SNSVADSDSTNYDDENSLNRGGTSES) form a disordered region. The RING-type; degenerate zinc-finger motif lies at 1265-1309 (CTFCCLSIHGLCIVCGLCLHVMHEDCYKEWFSNGDSISQSCSSGC).

Belongs to the WD repeat WDR59 family.

May be involved in telomere capping. This is an uncharacterized protein from Schizosaccharomyces pombe (strain 972 / ATCC 24843) (Fission yeast).